Consider the following 412-residue polypeptide: MKIYLVGGAVRDALLGLPVKDRDWVVVGSTPQEMLDAGYQQVGRDFPVFLHPQTHEEYALARTERKSGSGYTGFTCYAAPDVTLEDDLKRRDLTINALAQDDNGEIIDPYNGLGDLQNRLLRHVSPAFGEDPLRVLRVARFAARYAHLGFRIADETLTLMREMTHEGELEHLTPERVWKETESALTTRNPQVFFQVLRDCGALRVLFPEIDALFGVPAPARWHPEIDTGIHTLMTLSMAAMLSPQVDVRFATLCHDLGKGLTPPELWPRHHGHGPAGVKLVEQLCQRLRVPNEIRDLARLVAEFHDLIHTFPMLNPKTIVKLFDSIDAWRKPQRVEQLALTSEADVRGRTGFESADYPQGRWLREAWEVAQSVPTKAVVEAGFKGVEIREELTRRRIAAVASWKEQRCPKPD.

Residues Gly-8 and Arg-11 each coordinate ATP. Residues Gly-8 and Arg-11 each coordinate CTP. Mg(2+)-binding residues include Asp-21 and Asp-23. Positions 91, 137, and 140 each coordinate ATP. Positions 91, 137, and 140 each coordinate CTP. The HD domain maps to 228-329 (TGIHTLMTLS…VKLFDSIDAW (102 aa)).

The protein belongs to the tRNA nucleotidyltransferase/poly(A) polymerase family. Bacterial CCA-adding enzyme type 1 subfamily. In terms of assembly, monomer. Can also form homodimers and oligomers. The cofactor is Mg(2+). It depends on Ni(2+) as a cofactor.

The catalysed reaction is a tRNA precursor + 2 CTP + ATP = a tRNA with a 3' CCA end + 3 diphosphate. It carries out the reaction a tRNA with a 3' CCA end + 2 CTP + ATP = a tRNA with a 3' CCACCA end + 3 diphosphate. Its function is as follows. Catalyzes the addition and repair of the essential 3'-terminal CCA sequence in tRNAs without using a nucleic acid template. Adds these three nucleotides in the order of C, C, and A to the tRNA nucleotide-73, using CTP and ATP as substrates and producing inorganic pyrophosphate. tRNA 3'-terminal CCA addition is required both for tRNA processing and repair. Also involved in tRNA surveillance by mediating tandem CCA addition to generate a CCACCA at the 3' terminus of unstable tRNAs. While stable tRNAs receive only 3'-terminal CCA, unstable tRNAs are marked with CCACCA and rapidly degraded. This Escherichia coli (strain SE11) protein is Multifunctional CCA protein.